A 500-amino-acid polypeptide reads, in one-letter code: Probable cytosol aminopeptidase (500 aa).

Mn(2+) is bound by residues Lys264 and Asp269. Lys276 is a catalytic residue. Asp287, Asp346, and Glu348 together coordinate Mn(2+). The active site involves Arg350.

It belongs to the peptidase M17 family. Requires Mn(2+) as cofactor.

It is found in the cytoplasm. The catalysed reaction is Release of an N-terminal amino acid, Xaa-|-Yaa-, in which Xaa is preferably Leu, but may be other amino acids including Pro although not Arg or Lys, and Yaa may be Pro. Amino acid amides and methyl esters are also readily hydrolyzed, but rates on arylamides are exceedingly low.. The enzyme catalyses Release of an N-terminal amino acid, preferentially leucine, but not glutamic or aspartic acids.. Functionally, presumably involved in the processing and regular turnover of intracellular proteins. Catalyzes the removal of unsubstituted N-terminal amino acids from various peptides. This Nitrobacter winogradskyi (strain ATCC 25391 / DSM 10237 / CIP 104748 / NCIMB 11846 / Nb-255) protein is Probable cytosol aminopeptidase.